Consider the following 421-residue polypeptide: Leucine-rich repeat-containing protein 42 (421 aa).

LRR repeat units follow at residues 149 to 170 (VLCS…EEIK), 174 to 195 (ELTR…LEHL), 202 to 222 (SVTQ…RKMT), 234 to 255 (NLTL…GYLF), and 259 to 280 (KLNC…KDKL). The disordered stretch occupies residues 374-406 (HEPLLSQESKKSKKRAFEESEQEQSSPQSAKQK). Ser-399 is subject to Phosphoserine.

This sequence belongs to the LRRC42 family.

This Rattus norvegicus (Rat) protein is Leucine-rich repeat-containing protein 42 (Lrrc42).